The following is a 268-amino-acid chain: Urease accessory protein UreD (268 aa).

Belongs to the UreD family. UreD, UreF and UreG form a complex that acts as a GTP-hydrolysis-dependent molecular chaperone, activating the urease apoprotein by helping to assemble the nickel containing metallocenter of UreC. The UreE protein probably delivers the nickel.

It is found in the cytoplasm. Its function is as follows. Required for maturation of urease via the functional incorporation of the urease nickel metallocenter. The polypeptide is Urease accessory protein UreD (Lysinibacillus sphaericus (strain C3-41)).